The sequence spans 226 residues: Thymidylate kinase (226 aa).

20 to 27 (GGEGAGKS) is an ATP binding site.

This sequence belongs to the thymidylate kinase family.

The catalysed reaction is dTMP + ATP = dTDP + ADP. Functionally, phosphorylation of dTMP to form dTDP in both de novo and salvage pathways of dTTP synthesis. This chain is Thymidylate kinase, found in Bradyrhizobium sp. (strain ORS 278).